The sequence spans 317 residues: Iron-uptake system-binding protein (317 aa).

The N-terminal stretch at 1-19 (MKKISLTLLILLLALTAAA) is a signal peptide. A lipid anchor (N-palmitoyl cysteine) is attached at cysteine 20. A lipid anchor (S-diacylglycerol cysteine) is attached at cysteine 20. The 261-residue stretch at 57–317 (IAITGSVESM…KAAAEKLTQN (261 aa)) folds into the Fe/B12 periplasmic-binding domain.

Belongs to the bacterial solute-binding protein 8 family. As to quaternary structure, the complex is composed of one ATP-binding protein (YusV), two transmembrane proteins (FeuB and FeuC) and a solute-binding protein (FeuA).

The protein localises to the cell membrane. It localises to the cytoplasm. Its subcellular location is the membrane raft. In terms of biological role, involved in the uptake of iron. Its function is as follows. Part of the ABC transporter complex FeuABC/YusV involved in import of the catecholate siderophores bacillibactin and enterobactin. This chain is Iron-uptake system-binding protein (feuA), found in Bacillus subtilis (strain 168).